Reading from the N-terminus, the 148-residue chain is 3-hydroxyacyl-[acyl-carrier-protein] dehydratase FabZ (148 aa).

His-48 is a catalytic residue.

Belongs to the thioester dehydratase family. FabZ subfamily.

It is found in the cytoplasm. The enzyme catalyses a (3R)-hydroxyacyl-[ACP] = a (2E)-enoyl-[ACP] + H2O. Involved in unsaturated fatty acids biosynthesis. Catalyzes the dehydration of short chain beta-hydroxyacyl-ACPs and long chain saturated and unsaturated beta-hydroxyacyl-ACPs. In Campylobacter concisus (strain 13826), this protein is 3-hydroxyacyl-[acyl-carrier-protein] dehydratase FabZ.